The primary structure comprises 103 residues: Small ribosomal subunit protein uS10 (103 aa).

This sequence belongs to the universal ribosomal protein uS10 family. Part of the 30S ribosomal subunit.

Its function is as follows. Involved in the binding of tRNA to the ribosomes. The sequence is that of Small ribosomal subunit protein uS10 from Rubrobacter xylanophilus (strain DSM 9941 / JCM 11954 / NBRC 16129 / PRD-1).